The following is a 407-amino-acid chain: Argininosuccinate synthase (407 aa).

ATP contacts are provided by residues 10-18 (AYSGGLDTS) and alanine 37. L-citrulline is bound by residues tyrosine 90 and serine 95. Glycine 120 is an ATP binding site. Threonine 122, asparagine 126, and aspartate 127 together coordinate L-aspartate. L-citrulline is bound at residue asparagine 126. L-citrulline contacts are provided by arginine 130, serine 181, serine 190, glutamate 266, and tyrosine 278.

It belongs to the argininosuccinate synthase family. Type 1 subfamily. In terms of assembly, homotetramer.

The protein resides in the cytoplasm. It carries out the reaction L-citrulline + L-aspartate + ATP = 2-(N(omega)-L-arginino)succinate + AMP + diphosphate + H(+). It participates in amino-acid biosynthesis; L-arginine biosynthesis; L-arginine from L-ornithine and carbamoyl phosphate: step 2/3. This Ruegeria sp. (strain TM1040) (Silicibacter sp.) protein is Argininosuccinate synthase.